Here is a 373-residue protein sequence, read N- to C-terminus: tRNA pseudouridine synthase Pus10 (373 aa).

D197 functions as the Nucleophile in the catalytic mechanism. Residues Y265 and Y336 each contribute to the substrate site.

Belongs to the pseudouridine synthase Pus10 family.

It carries out the reaction uridine(54) in tRNA = pseudouridine(54) in tRNA. The enzyme catalyses uridine(55) in tRNA = pseudouridine(55) in tRNA. Responsible for synthesis of pseudouridine from uracil-54 and uracil-55 in the psi GC loop of transfer RNAs. This is tRNA pseudouridine synthase Pus10 from Korarchaeum cryptofilum (strain OPF8).